The sequence spans 146 residues: 3-dehydroquinate dehydratase (146 aa).

Catalysis depends on Tyr23, which acts as the Proton acceptor. Substrate is bound by residues Asn74, His80, and Asp87. The active-site Proton donor is His100. Residues 101 to 102 and Arg111 contribute to the substrate site; that span reads IS.

Belongs to the type-II 3-dehydroquinase family. As to quaternary structure, homododecamer.

It catalyses the reaction 3-dehydroquinate = 3-dehydroshikimate + H2O. The protein operates within metabolic intermediate biosynthesis; chorismate biosynthesis; chorismate from D-erythrose 4-phosphate and phosphoenolpyruvate: step 3/7. Its function is as follows. Catalyzes a trans-dehydration via an enolate intermediate. This is 3-dehydroquinate dehydratase from Bacillus cereus (strain ATCC 14579 / DSM 31 / CCUG 7414 / JCM 2152 / NBRC 15305 / NCIMB 9373 / NCTC 2599 / NRRL B-3711).